The primary structure comprises 344 residues: Cyclin-D1-binding protein 1 homolog (344 aa).

The disordered stretch occupies residues 191 to 215 (SQDPFGDVLDDDDDDEGGRGNQDRY).

Belongs to the CCNDBP1 family.

It is found in the cytoplasm. It localises to the nucleus. May negatively regulate cell cycle progression. The protein is Cyclin-D1-binding protein 1 homolog (ccndbp1) of Danio rerio (Zebrafish).